The chain runs to 138 residues: Regulator of ribonuclease activity B (138 aa).

The tract at residues 114–138 (YFEDPNGEDGDDEDFVDEDDDGVRH) is disordered. Acidic residues predominate over residues 118-138 (PNGEDGDDEDFVDEDDDGVRH).

It belongs to the RraB family. In terms of assembly, interacts with the C-terminal region of Rne.

The protein localises to the cytoplasm. Functionally, globally modulates RNA abundance by binding to RNase E (Rne) and regulating its endonucleolytic activity. Can modulate Rne action in a substrate-dependent manner by altering the composition of the degradosome. This is Regulator of ribonuclease activity B from Escherichia coli (strain K12).